The sequence spans 261 residues: Cytochrome c oxidase subunit 3 (261 aa).

Over 1–15 the chain is Mitochondrial matrix; that stretch reads MTHQAHAYHMVDPSP. Residues 16 to 34 traverse the membrane as a helical segment; sequence WPLTGAVAALLMTSGLAVW. The Mitochondrial intermembrane segment spans residues 35–40; sequence FHFHST. The chain crosses the membrane as a helical span at residues 41–66; it reads TLMALGTVLLLLTMYQWWRDIIREGT. The Mitochondrial matrix segment spans residues 67 to 72; that stretch reads FQGHHT. Residues 73 to 105 form a helical membrane-spanning segment; it reads PPVQKGLRYGMILFITSEVFFFLGFFWAFYHAS. Over 106 to 128 the chain is Mitochondrial intermembrane; the sequence is LAPTPELGGCWPPTGITTLDPFE. A helical membrane pass occupies residues 129–152; sequence VPLLNTAVLLASGVTVTWAHHSIM. Over 153 to 155 the chain is Mitochondrial matrix; that stretch reads EGE. Residues 156-183 form a helical membrane-spanning segment; that stretch reads RKQAIHSLTLTILLGFYFTFLQGLEYYD. Topologically, residues 184–190 are mitochondrial intermembrane; it reads APFTIAD. A helical membrane pass occupies residues 191 to 223; sequence GVYGSTFFVATGFHGLHVIIGSTFLAVCLLRQI. At 224-232 the chain is on the mitochondrial matrix side; the sequence is RYHFTSEHH. A helical transmembrane segment spans residues 233 to 256; the sequence is FGFEAAAWYWHFVDVVWLFLYISI. Residues 257–261 are Mitochondrial intermembrane-facing; sequence YWWGS.

This sequence belongs to the cytochrome c oxidase subunit 3 family. As to quaternary structure, component of the cytochrome c oxidase (complex IV, CIV), a multisubunit enzyme composed of 14 subunits. The complex is composed of a catalytic core of 3 subunits MT-CO1, MT-CO2 and MT-CO3, encoded in the mitochondrial DNA, and 11 supernumerary subunits COX4I, COX5A, COX5B, COX6A, COX6B, COX6C, COX7A, COX7B, COX7C, COX8 and NDUFA4, which are encoded in the nuclear genome. The complex exists as a monomer or a dimer and forms supercomplexes (SCs) in the inner mitochondrial membrane with NADH-ubiquinone oxidoreductase (complex I, CI) and ubiquinol-cytochrome c oxidoreductase (cytochrome b-c1 complex, complex III, CIII), resulting in different assemblies (supercomplex SCI(1)III(2)IV(1) and megacomplex MCI(2)III(2)IV(2)).

The protein localises to the mitochondrion inner membrane. It catalyses the reaction 4 Fe(II)-[cytochrome c] + O2 + 8 H(+)(in) = 4 Fe(III)-[cytochrome c] + 2 H2O + 4 H(+)(out). Component of the cytochrome c oxidase, the last enzyme in the mitochondrial electron transport chain which drives oxidative phosphorylation. The respiratory chain contains 3 multisubunit complexes succinate dehydrogenase (complex II, CII), ubiquinol-cytochrome c oxidoreductase (cytochrome b-c1 complex, complex III, CIII) and cytochrome c oxidase (complex IV, CIV), that cooperate to transfer electrons derived from NADH and succinate to molecular oxygen, creating an electrochemical gradient over the inner membrane that drives transmembrane transport and the ATP synthase. Cytochrome c oxidase is the component of the respiratory chain that catalyzes the reduction of oxygen to water. Electrons originating from reduced cytochrome c in the intermembrane space (IMS) are transferred via the dinuclear copper A center (CU(A)) of subunit 2 and heme A of subunit 1 to the active site in subunit 1, a binuclear center (BNC) formed by heme A3 and copper B (CU(B)). The BNC reduces molecular oxygen to 2 water molecules using 4 electrons from cytochrome c in the IMS and 4 protons from the mitochondrial matrix. In Gadus morhua (Atlantic cod), this protein is Cytochrome c oxidase subunit 3 (mt-co3).